The chain runs to 396 residues: Elongation factor Tu (396 aa).

Residues 10–205 (KPHVNVGTIG…AVDEYIPTPE (196 aa)) form the tr-type G domain. Residues 19 to 26 (GHVDHGKT) form a G1 region. 19-26 (GHVDHGKT) is a binding site for GTP. Position 26 (T26) interacts with Mg(2+). A G2 region spans residues 61–65 (GITIA). The segment at 82–85 (DCPG) is G3. GTP contacts are provided by residues 82 to 86 (DCPGH) and 137 to 140 (NKTD). The segment at 137 to 140 (NKTD) is G4. The G5 stretch occupies residues 175-177 (SAL).

This sequence belongs to the TRAFAC class translation factor GTPase superfamily. Classic translation factor GTPase family. EF-Tu/EF-1A subfamily. In terms of assembly, monomer.

Its subcellular location is the cytoplasm. The enzyme catalyses GTP + H2O = GDP + phosphate + H(+). Its function is as follows. GTP hydrolase that promotes the GTP-dependent binding of aminoacyl-tRNA to the A-site of ribosomes during protein biosynthesis. The protein is Elongation factor Tu of Salinibacter ruber (strain DSM 13855 / M31).